Here is a 146-residue protein sequence, read N- to C-terminus: Anti-sigma F factor (146 aa).

It belongs to the anti-sigma-factor family.

It catalyses the reaction L-seryl-[protein] + ATP = O-phospho-L-seryl-[protein] + ADP + H(+). The enzyme catalyses L-threonyl-[protein] + ATP = O-phospho-L-threonyl-[protein] + ADP + H(+). Its function is as follows. Binds to sigma F and blocks its ability to form an RNA polymerase holoenzyme (E-sigma F). Phosphorylates SpoIIAA on a serine residue. This phosphorylation may enable SpoIIAA to act as an anti-anti-sigma factor that counteracts SpoIIAB and thus releases sigma F from inhibition. This chain is Anti-sigma F factor, found in Shouchella clausii (strain KSM-K16) (Alkalihalobacillus clausii).